The primary structure comprises 181 residues: MKQLLDFLPLLVFFAVYKFFDIYAATGALIVATLIQLIATYALYKKIEKMHLITFALVASFGTATLIFHDDAFIKWKVTIVYALFAIALIAGQFLGKPILKSMLGQEMPVDDKIWARLTWYWVLFFVACGLINIYVAFSLSQETWVNFKVFGLTAATLVNTLLTVVYLFKHLPEDKKKELK.

The next 5 membrane-spanning stretches (helical) occupy residues 19–39 (FFDI…QLIA), 50–70 (MHLI…IFHD), 80–100 (IVYA…KPIL), 118–138 (LTWY…YVAF), and 148–168 (FKVF…VVYL).

It belongs to the YciB family.

It localises to the cell inner membrane. In terms of biological role, plays a role in cell envelope biogenesis, maintenance of cell envelope integrity and membrane homeostasis. The polypeptide is Inner membrane-spanning protein YciB (Shewanella amazonensis (strain ATCC BAA-1098 / SB2B)).